Consider the following 578-residue polypeptide: Triokinase/FMN cyclase (578 aa).

The DhaK domain maps to 9–336; the sequence is SVEGCAGDAL…IDAETNAKAW (328 aa). Residues 56–59, K109, and D114 contribute to the dihydroxyacetone site; that span reads GSGH. The active-site Tele-hemiaminal-histidine intermediate is the H221. The DhaL domain occupies 372–571; that stretch reads KQMTLVLDRI…AAAIFRAILE (200 aa). ATP is bound by residues 401-404, 446-447, G486, and 494-495; these read DGDC, SS, and TM. Phosphoserine occurs at positions 511 and 545. 556–558 provides a ligand contact to ATP; the sequence is DPG.

It belongs to the dihydroxyacetone kinase (DAK) family. Homodimer. Interacts with IFIH1 (via the CARD domains), the interaction is inhibited by viral infection. Mg(2+) is required as a cofactor. Mn(2+) serves as cofactor. The cofactor is Co(2+).

It carries out the reaction dihydroxyacetone + ATP = dihydroxyacetone phosphate + ADP + H(+). The enzyme catalyses D-glyceraldehyde + ATP = D-glyceraldehyde 3-phosphate + ADP + H(+). The catalysed reaction is FAD = riboflavin cyclic-4',5'-phosphate + AMP + H(+). Its activity is regulated as follows. Each activity is inhibited by the substrate(s) of the other. Its function is as follows. Catalyzes both the phosphorylation of dihydroxyacetone and of glyceraldehyde, and the splitting of ribonucleoside diphosphate-X compounds among which FAD is the best substrate. Represses IFIH1-mediated cellular antiviral response. This chain is Triokinase/FMN cyclase (Tkfc), found in Rattus norvegicus (Rat).